Reading from the N-terminus, the 293-residue chain is Nucleotide-binding protein DvMF_0424 (293 aa).

13 to 20 (GLSGAGKS) contributes to the ATP binding site. A GTP-binding site is contributed by 65–68 (DLRE).

It belongs to the RapZ-like family.

Its function is as follows. Displays ATPase and GTPase activities. The chain is Nucleotide-binding protein DvMF_0424 from Nitratidesulfovibrio vulgaris (strain DSM 19637 / Miyazaki F) (Desulfovibrio vulgaris).